Reading from the N-terminus, the 361-residue chain is Histidinol-phosphate aminotransferase (361 aa).

N6-(pyridoxal phosphate)lysine is present on lysine 224.

The protein belongs to the class-II pyridoxal-phosphate-dependent aminotransferase family. Histidinol-phosphate aminotransferase subfamily. As to quaternary structure, homodimer. Pyridoxal 5'-phosphate serves as cofactor.

It catalyses the reaction L-histidinol phosphate + 2-oxoglutarate = 3-(imidazol-4-yl)-2-oxopropyl phosphate + L-glutamate. It functions in the pathway amino-acid biosynthesis; L-histidine biosynthesis; L-histidine from 5-phospho-alpha-D-ribose 1-diphosphate: step 7/9. This is Histidinol-phosphate aminotransferase from Bacillus licheniformis (strain ATCC 14580 / DSM 13 / JCM 2505 / CCUG 7422 / NBRC 12200 / NCIMB 9375 / NCTC 10341 / NRRL NRS-1264 / Gibson 46).